A 308-amino-acid chain; its full sequence is MSAQKPGLHPRNRHHSRYDLATLCQVNPELRQFLTLTPAGEQSVDFANPLAVKALNKALLAHFYAVANWDIPDGFLCPPVPGRADHIHHLADLLAEASGTIPANASILDIGVGANCIYPLIGVHEYGWRFTGSETSSQALSSAQAIISANPGLNRAIRLRRQKESGAIFNGIIHKNEQYDATLCNPPFHDSAAAARAGSERKRRNLGLNKDDALNFGGQQQELWCEGGEVTFIKKMIEESKGFAKQMMWFTSLVSRGENLPPLYRALTDVGAVKVVKKEMAQGQKQSRFIAWTFMNDEQRRRFVNRQR.

Belongs to the methyltransferase superfamily. METTL16/RlmF family.

The protein resides in the cytoplasm. The catalysed reaction is adenosine(1618) in 23S rRNA + S-adenosyl-L-methionine = N(6)-methyladenosine(1618) in 23S rRNA + S-adenosyl-L-homocysteine + H(+). In terms of biological role, specifically methylates the adenine in position 1618 of 23S rRNA. The protein is Ribosomal RNA large subunit methyltransferase F of Shigella dysenteriae serotype 1 (strain Sd197).